A 423-amino-acid chain; its full sequence is UPF0229 protein VV2350 (423 aa).

Residues 81–111 (QFITGDKIERPKGGQGGGGAGDGDASADGEG) form a disordered region. The segment covering 93–102 (GGQGGGGAGD) has biased composition (gly residues).

It belongs to the UPF0229 family.

In Vibrio vulnificus (strain YJ016), this protein is UPF0229 protein VV2350.